The following is a 361-amino-acid chain: 3-dehydroquinate synthase (361 aa).

Belongs to the archaeal-type DHQ synthase family.

The enzyme catalyses 2-amino-2,3,7-trideoxy-D-lyxo-hept-6-ulosonate + NAD(+) + H2O = 3-dehydroquinate + NH4(+) + NADH + H(+). Its function is as follows. Catalyzes the oxidative deamination and cyclization of 2-amino-3,7-dideoxy-D-threo-hept-6-ulosonic acid (ADH) to yield 3-dehydroquinate (DHQ), which is fed into the canonical shikimic pathway of aromatic amino acid biosynthesis. This chain is 3-dehydroquinate synthase, found in Methanococcus maripaludis (strain C5 / ATCC BAA-1333).